The chain runs to 190 residues: RNA pyrophosphohydrolase (190 aa).

In terms of domain architecture, Nudix hydrolase spans 6-149; that stretch reads GYRPNVGIVL…KRGVYARALC (144 aa). Residues 38-59 carry the Nudix box motif; it reads GGMHSDETPVEAMYRELNEEIG.

It belongs to the Nudix hydrolase family. RppH subfamily. A divalent metal cation serves as cofactor.

Accelerates the degradation of transcripts by removing pyrophosphate from the 5'-end of triphosphorylated RNA, leading to a more labile monophosphorylated state that can stimulate subsequent ribonuclease cleavage. This chain is RNA pyrophosphohydrolase, found in Xylella fastidiosa (strain M12).